Consider the following 258-residue polypeptide: MLSPCLAAPATECRDPADAPAAPARHTGPARPRKRRPRNWKPHLPRERLLERGPAALTDAELIALLLGTGGGGRDVFASARALLARFGDSLRDMLDAEPDVFATHPGIGTARSAVLIAVTEIVRRALVEKARERLQIDSPGAVEDYLRLRIGTRPHEVFVTLYLDARHGLIDVEESARGSLTRMAVYPREIVRRALVLNAAALIIAHNHPSGAVQPSAEDRRLTRVLHEALALIDAKLLDHVVVGTADTFSFARAGWL.

Positions 1 to 43 (MLSPCLAAPATECRDPADAPAAPARHTGPARPRKRRPRNWKPH) are disordered. Basic residues predominate over residues 31–43 (RPRKRRPRNWKPH). An MPN domain is found at 136-258 (QIDSPGAVED…TFSFARAGWL (123 aa)). 3 residues coordinate Zn(2+): H207, H209, and D220. The JAMM motif signature appears at 207 to 220 (HNHPSGAVQPSAED).

It belongs to the UPF0758 family.

The sequence is that of UPF0758 protein Bamb_2548 from Burkholderia ambifaria (strain ATCC BAA-244 / DSM 16087 / CCUG 44356 / LMG 19182 / AMMD) (Burkholderia cepacia (strain AMMD)).